Reading from the N-terminus, the 384-residue chain is MRALSILGSTGSIGLSTLDVVRRHKESFSVVGLAEGHDVHALAEQIKEFRPTIVSVRDENAADELKTLLGPADRPEIVHGIEGAGTVAAAEGSDMVVSAIVGAAGLTPTIKAIKAGKDIALANKETLVVAGQLVSDLVKQNGVELLPVDSEHSAIFQSLLGHRAEDVERIILTASGGPFRNTPLEEMKKAGPEQALKHPQWTMGAKITIDSATMMNKGLEVIEAHWLFNMPADRIGVVVHPQSIVHSMVEYRDGCVIAQLGSPDMRAPIAYALSYPERSESGVKKLNLAEIGTLTFEEPDMVRFPALQLAFDALKAGKTYPAVLNAANEIAVAAFLNKQIGFTDIADTVDKTMQAHEAYTPMELDEYIHADRWARQTASTFISS.

NADPH contacts are provided by T10, G11, S12, I13, G36, and N123. Position 124 (K124) interacts with 1-deoxy-D-xylulose 5-phosphate. NADPH is bound at residue E125. Residue D149 coordinates Mn(2+). 1-deoxy-D-xylulose 5-phosphate-binding residues include S150, E151, S175, and H198. E151 lines the Mn(2+) pocket. G204 lines the NADPH pocket. Residues S211, N216, K217, and E220 each contribute to the 1-deoxy-D-xylulose 5-phosphate site. Residue E220 coordinates Mn(2+).

This sequence belongs to the DXR family. Requires Mg(2+) as cofactor. It depends on Mn(2+) as a cofactor.

The catalysed reaction is 2-C-methyl-D-erythritol 4-phosphate + NADP(+) = 1-deoxy-D-xylulose 5-phosphate + NADPH + H(+). The protein operates within isoprenoid biosynthesis; isopentenyl diphosphate biosynthesis via DXP pathway; isopentenyl diphosphate from 1-deoxy-D-xylulose 5-phosphate: step 1/6. Functionally, catalyzes the NADPH-dependent rearrangement and reduction of 1-deoxy-D-xylulose-5-phosphate (DXP) to 2-C-methyl-D-erythritol 4-phosphate (MEP). The sequence is that of 1-deoxy-D-xylulose 5-phosphate reductoisomerase from Chlorobium phaeovibrioides (strain DSM 265 / 1930) (Prosthecochloris vibrioformis (strain DSM 265)).